A 114-amino-acid polypeptide reads, in one-letter code: Apokedarcidin (114 aa).

Intrachain disulfides connect C37–C47 and C88–C95.

Belongs to the neocarzinostatin family.

In terms of biological role, binds non-covalently to an enediyne chromophore which is the cytotoxic and mutagenic component of the antibiotic. The chromophore cleaves duplex DNA site-specifically in a single-stranded manner. The apoprotein cleaves proteins selectively, in particular highly basic histones, with H1 proteins being cleaved the more readily. In Actinomycete sp. (strain L585-6 / ATCC 53650), this protein is Apokedarcidin.